Here is a 473-residue protein sequence, read N- to C-terminus: MAP kinase-activated protein kinase 5 (473 aa).

The Protein kinase domain occupies 22-304 (INWTQKLGAG…IEGVLDHPWL (283 aa)). Residues 28–36 (LGAGISGPV) and Lys-51 contribute to the ATP site. Ser-115 is subject to Phosphoserine; by PKA. Residue Asp-148 is the Proton acceptor of the active site. Thr-182 is subject to Phosphothreonine; by MAPK11, MAPK14, MAPK4, MAPK6 and PKA. Phosphoserine occurs at positions 212 and 354. Positions 409–440 (ENEDEKLNEVMQEAWKYNRECKLLRDTLQSFS) form a coiled coil.

The protein belongs to the protein kinase superfamily. CAMK Ser/Thr protein kinase family. Interacts with ERK3/MAPK6 and ERK4/MAPK4 (via FRIEDE motif); the interaction is direct. Interacts with YWHAE; the interaction prevents phosphorylation of HSP27/HSPB1 leading to disrupt F-actin polymerization. Interacts with SQSTM1. Phosphorylated on Thr-182 ERK3/MAPK6 or ERK4/MAPK4; which is the regulatory phosphorylation site and is located on the T-loop/loop 12, leading to activation. Phosphorylation at Thr-182 by p38-alpha/MAPK14, p38-beta/MAPK11 is subject to debate. Phosphorylated at Ser-115 by PKA/PRKACA, leading to localization to the cytoplasm. Autophosphorylated. In terms of tissue distribution, expressed ubiquitously.

It localises to the cytoplasm. Its subcellular location is the nucleus. The enzyme catalyses L-seryl-[protein] + ATP = O-phospho-L-seryl-[protein] + ADP + H(+). It catalyses the reaction L-threonyl-[protein] + ATP = O-phospho-L-threonyl-[protein] + ADP + H(+). Activated following phosphorylation at Thr-182 by p38-alpha/MAPK14, p38-beta/MAPK11, ERK2/MAPK1, ERK3/MAPK6, and ERK4/MAPK4. Activated by stress-related extracellular stimuli; such as H(2)O(2), arsenite, anisomycin TNF alpha and also PMA and the calcium ionophore A23187; but to a lesser extent. In vitro, activated by SQSTM1. Inhibited by diterpenoid alkaloid noroxoaconitine. Tumor suppressor serine/threonine-protein kinase involved in mTORC1 signaling and post-transcriptional regulation. Phosphorylates FOXO3, ERK3/MAPK6, ERK4/MAPK4, HSP27/HSPB1, p53/TP53 and RHEB. Acts as a tumor suppressor by mediating Ras-induced senescence and phosphorylating p53/TP53. Involved in post-transcriptional regulation of MYC by mediating phosphorylation of FOXO3: phosphorylation of FOXO3 leads to promote nuclear localization of FOXO3, enabling expression of miR-34b and miR-34c, 2 post-transcriptional regulators of MYC that bind to the 3'UTR of MYC transcript and prevent MYC translation. Acts as a negative regulator of mTORC1 signaling by mediating phosphorylation and inhibition of RHEB. Part of the atypical MAPK signaling via its interaction with ERK3/MAPK6 or ERK4/MAPK4: the precise role of the complex formed with ERK3/MAPK6 or ERK4/MAPK4 is still unclear, but the complex follows a complex set of phosphorylation events: upon interaction with atypical MAPK (ERK3/MAPK6 or ERK4/MAPK4), ERK3/MAPK6 (or ERK4/MAPK4) is phosphorylated and then mediates phosphorylation and activation of MAPKAPK5, which in turn phosphorylates ERK3/MAPK6 (or ERK4/MAPK4). Mediates phosphorylation of HSP27/HSPB1 in response to PKA/PRKACA stimulation, inducing F-actin rearrangement. This is MAP kinase-activated protein kinase 5 (MAPKAPK5) from Homo sapiens (Human).